The sequence spans 233 residues: Opacity protein opA67 (233 aa).

Residue alanine 1 is a signal peptide.

It belongs to the opacity porin family.

It is found in the cell outer membrane. Its function is as follows. Implicated in a number of adherence functions. OPA proteins are implicated in pathogenesis and are subject to phase variation. This is Opacity protein opA67 from Neisseria gonorrhoeae.